Here is a 33-residue protein sequence, read N- to C-terminus: Protamine-2C (33 aa).

The interval 1–33 (MPRRRRSSRRPVRRRRRPRVSRRRRRRGGRRRR) is disordered.

In terms of tissue distribution, testis.

It is found in the nucleus. The protein resides in the chromosome. Protamines substitute for histones in the chromatin of sperm during the haploid phase of spermatogenesis. They compact sperm DNA into a highly condensed, stable and inactive complex. This chain is Protamine-2C, found in Oncorhynchus mykiss (Rainbow trout).